The primary structure comprises 198 residues: Small ribosomal subunit protein uS4 (198 aa).

Residues 91–151 enclose the S4 RNA-binding domain; sequence SRLDNIVYRL…EKSKNLKIVE (61 aa).

This sequence belongs to the universal ribosomal protein uS4 family. As to quaternary structure, part of the 30S ribosomal subunit. Contacts protein S5. The interaction surface between S4 and S5 is involved in control of translational fidelity.

One of the primary rRNA binding proteins, it binds directly to 16S rRNA where it nucleates assembly of the body of the 30S subunit. Its function is as follows. With S5 and S12 plays an important role in translational accuracy. The protein is Small ribosomal subunit protein uS4 of Phytoplasma australiense.